The primary structure comprises 1949 residues: Protein GREB1 (1949 aa).

Disordered regions lie at residues 52-77, 302-334, and 1085-1210; these read EGGS…GPPN, ILSN…GGGN, and EALE…GQRS. Residues 59–68 show a composition bias toward acidic residues; it reads NEEEEEEGEG. Composition is skewed to basic and acidic residues over residues 1085–1095 and 1110–1126; these read EALESDAEKLS and TSEK…RSHD. Positions 1127–1147 are enriched in low complexity; that stretch reads SASSSLSSKASGSALGGESSA. Positions 1166-1178 are enriched in basic and acidic residues; it reads PAEEGRAPGEKQR. The chain crosses the membrane as a helical span at residues 1868-1888; that stretch reads DLLFSGLLLYLCDSFVGASFL.

It belongs to the GREB1 family. As to expression, expressed in proliferating prostatic tissue and prostate cancer.

It localises to the membrane. Its function is as follows. May play a role in estrogen-stimulated cell proliferation. Acts as a regulator of hormone-dependent cancer growth in breast and prostate cancers. This chain is Protein GREB1 (GREB1), found in Homo sapiens (Human).